The primary structure comprises 319 residues: Probable secreted beta-glucosidase C2G2.17c (319 aa).

An N-terminal signal peptide occupies residues 1-19 (MLFNNFLCFAVSAIPLVSA). 5 N-linked (GlcNAc...) asparagine glycosylation sites follow: N36, N39, N45, N48, and N221.

It belongs to the SUN family.

Its subcellular location is the secreted. In terms of biological role, cell surface beta-glucosidase involved in cell wall biogenesis. The polypeptide is Probable secreted beta-glucosidase C2G2.17c (Schizosaccharomyces pombe (strain 972 / ATCC 24843) (Fission yeast)).